A 240-amino-acid polypeptide reads, in one-letter code: Venom hemolysin-like protein 1 (240 aa).

Positions 1–18 (MQYKLILLVVGLFQASLA) are cleaved as a signal peptide. Residues 25 to 50 (ESVPHPSKDVAPPDTQDSSTQTEVTT) are disordered. Residues 39–50 (TQDSSTQTEVTT) are compositionally biased toward polar residues.

In terms of tissue distribution, expressed by the venom gland (anterior main gland) (at protein level).

The protein localises to the secreted. The sequence is that of Venom hemolysin-like protein 1 from Platymeris rhadamanthus (Red spot assassin bug).